Here is a 338-residue protein sequence, read N- to C-terminus: Trans-enoyl reductase fsr4 (338 aa).

NADP(+) is bound at residue 65 to 68 (KDWK). 147–153 (AAFTAAC) is a substrate binding site. NADP(+) contacts are provided by residues 182 to 185 (SSAV), 205 to 208 (AGRA), Tyr-227, and 277 to 278 (II).

The protein belongs to the zinc-containing alcohol dehydrogenase family.

In terms of biological role, trans-enoyl reductase; part of the gene cluster that mediates the biosynthesis of fusarubins, highly pigmented naphthoquinones responsible for the coloration of the fruiting bodies. The non-reducing polyketide synthase FSR1 is responsible for the condensation of seven acetyl-CoA units to yield a haptaketide. After rings A and B are formed by aldol-type cyclization, the PKS-derived product is released as 6-O-demethylfusarubinaldehyde. Then, two hydroxyl groups at C-5 and C-10 are incorporated by FSR3, and simultaneously hydroxyl groups at C-6 and C-8 are methylated by FSR2. The aldehyde is, on the one hand, reduced by FSR3 to 8-O-methylfusarubin alcohol, which equilibrates mainly with 8-O-methylfusarubin and only small amounts of 8-O-methylnectriafurone. On the other hand, the aldehyde can be oxidized to form 8-O-methylfusarubinic acid, a reaction driven by FSR3 equilibrating with 8-O-methylfusarubinlactone, finally resulting in 8-O-methylanhydrofusarubinlactol after a further reduction step and loss of water. 8-O-Methylfusarubinic acid can also undergo decarboxylation, resulting in 8-O-methyl-13-hydroxynorjavanicin after another hydroxylation step at C-13. Both steps are most likely also accomplished by FSR3. No enzymatic function has been determined so far for either FSR4 and FSR5. Their deletion does not alter the product spectrum, but the possibility that they catalyze specific enzymatic steps during perithecium development cannot be ruled out. FSR4 might possess a regulatory function in the biosynthesis of fusarubins. The polypeptide is Trans-enoyl reductase fsr4 (Gibberella fujikuroi (strain CBS 195.34 / IMI 58289 / NRRL A-6831) (Bakanae and foot rot disease fungus)).